Consider the following 245-residue polypeptide: Large ribosomal subunit protein uL29m (245 aa).

Low complexity-rich tracts occupy residues 36-49 (SFNS…TSSS) and 234-245 (STKSETTTSKNI). Disordered regions lie at residues 36–98 (SFNS…NPDH) and 207–245 (RPSP…SKNI).

Belongs to the universal ribosomal protein uL29 family. Component of the mitochondrial large ribosomal subunit. Mature mitochondrial ribosomes consist of a small (37S) and a large (54S) subunit. The 37S subunit contains at least 33 different proteins and 1 molecule of RNA (15S). The 54S subunit contains at least 45 different proteins and 1 molecule of RNA (21S).

It localises to the mitochondrion. The polypeptide is Large ribosomal subunit protein uL29m (MRPL4) (Coccidioides immitis (strain RS) (Valley fever fungus)).